Consider the following 268-residue polypeptide: Small ribosomal subunit protein uS3 (268 aa).

The 69-residue stretch at 38-106 folds into the KH type-2 domain; the sequence is IRKLLATGME…QVQLNILEVK (69 aa). The tract at residues 217–268 is disordered; sequence NTAAPAGDRPRRERPSRPRRSGATGTTATSTEAGRAATATADAPATEQNQEG. The span at 237–268 shows a compositional bias: low complexity; the sequence is SGATGTTATSTEAGRAATATADAPATEQNQEG.

Belongs to the universal ribosomal protein uS3 family. In terms of assembly, part of the 30S ribosomal subunit. Forms a tight complex with proteins S10 and S14.

Its function is as follows. Binds the lower part of the 30S subunit head. Binds mRNA in the 70S ribosome, positioning it for translation. The sequence is that of Small ribosomal subunit protein uS3 from Rhodococcus erythropolis (strain PR4 / NBRC 100887).